A 643-amino-acid chain; its full sequence is Maternal embryonic leucine zipper kinase (643 aa).

The Protein kinase domain maps to 11-263 (YELYETIGTG…MRNLLNHPWV (253 aa)). ATP contacts are provided by residues 17 to 25 (IGTGGFAKV) and K40. T56 is subject to Phosphothreonine; by autocatalysis. D132 functions as the Proton acceptor in the catalytic mechanism. Residue Y163 is modified to Phosphotyrosine; by autocatalysis. T167 is subject to Phosphothreonine; by autocatalysis. Phosphoserine; by autocatalysis is present on residues S171 and S253. The interval 282 to 321 (LDEDCVTELSVHHRSSRQTMEDLISSWQYDHLTATYLLLL) is UBA-like. An autoinhibitory region region spans residues 326–643 (RGKPARLQLL…VEDILSGCKM (318 aa)). S336 and S343 each carry phosphoserine; by autocatalysis. Position 352 is a phosphoserine (S352). Phosphoserine; by autocatalysis occurs at positions 399 and 423. T486 carries the phosphothreonine; by autocatalysis modification. A Phosphoserine modification is found at S490. Residue S497 is modified to Phosphoserine; by autocatalysis. Residue T510 is modified to Phosphothreonine. Position 521 is a phosphoserine; by autocatalysis (S521). T531 carries the phosphothreonine; by autocatalysis modification. In terms of domain architecture, KA1 spans 594 to 643 (SDFGKVTMQFELEVCQLQRPDVVGIRRQRLKGDAWVYKRLVEDILSGCKM).

This sequence belongs to the protein kinase superfamily. CAMK Ser/Thr protein kinase family. SNF1 subfamily. As to quaternary structure, monomer. Interacts with ZNF622 and PPP1R8. In terms of processing, autophosphorylated: autophosphorylation of the T-loop at Thr-167 and Ser-171 is required for activation. Expressed in testis, ovary, thymus, spleen and T-cell. Expressed by neural progenitors: highly enriched in cultures containing multipotent progenitors.

It is found in the cell membrane. The enzyme catalyses L-tyrosyl-[protein] + ATP = O-phospho-L-tyrosyl-[protein] + ADP + H(+). The catalysed reaction is L-seryl-[protein] + ATP = O-phospho-L-seryl-[protein] + ADP + H(+). It carries out the reaction L-threonyl-[protein] + ATP = O-phospho-L-threonyl-[protein] + ADP + H(+). Activated by autophosphorylation of the T-loop at Thr-167 and Ser-171: in contrast to other members of the SNF1 subfamily, phosphorylation at Thr-167 is not mediated by STK11/LKB1 but via autophosphorylation instead. Inhibited by calcium-binding. Kinase activity is also regulated by reducing agents: dithiothreitol (DTT) or reduced glutathione are required for kinase activity in vitro; such dependence is however not due to the presence of disulfide bonds. Serine/threonine-protein kinase involved in various processes such as cell cycle regulation, self-renewal of stem cells, apoptosis and splicing regulation. Has a broad substrate specificity; phosphorylates BCL2L14, CDC25B, MAP3K5/ASK1 and ZNF622. Acts as an activator of apoptosis by phosphorylating and activating MAP3K5/ASK1. Acts as a regulator of cell cycle, notably by mediating phosphorylation of CDC25B, promoting localization of CDC25B to the centrosome and the spindle poles during mitosis. Plays a key role in cell proliferation. Required for proliferation of embryonic and postnatal multipotent neural progenitors. Phosphorylates and inhibits BCL2L14. Also involved in the inhibition of spliceosome assembly during mitosis by phosphorylating ZNF622, thereby contributing to its redirection to the nucleus. May also play a role in primitive hematopoiesis. The polypeptide is Maternal embryonic leucine zipper kinase (Melk) (Mus musculus (Mouse)).